The chain runs to 226 residues: Ribonuclease 3 (226 aa).

The RNase III domain occupies 7-129; sequence LPRLCRTLGY…IIGAIYLDSD (123 aa). Glu-42 contributes to the Mg(2+) binding site. Asp-46 is an active-site residue. Asp-115 and Glu-118 together coordinate Mg(2+). Glu-118 is an active-site residue. The DRBM domain occupies 156 to 226; it reads DAKTLLQEYL…AAQVLELLKK (71 aa).

It belongs to the ribonuclease III family. In terms of assembly, homodimer. Mg(2+) serves as cofactor.

It localises to the cytoplasm. The catalysed reaction is Endonucleolytic cleavage to 5'-phosphomonoester.. Digests double-stranded RNA. Involved in the processing of primary rRNA transcript to yield the immediate precursors to the large and small rRNAs (23S and 16S). Processes some mRNAs, and tRNAs when they are encoded in the rRNA operon. Processes pre-crRNA and tracrRNA of type II CRISPR loci if present in the organism. The protein is Ribonuclease 3 of Shewanella sp. (strain W3-18-1).